Here is a 126-residue protein sequence, read N- to C-terminus: MDVSLPCIKIQVQTRYIEEQSNPEYQRFVFAYLITIKNLSSQTVQLMSRRWLITDADGKQTVVEGDGVVGEQPRIKANDEYTYSSGTALDTPVGVMQGQYLMIDEQGESFTVEIEPFRLAVPHVLN.

An ApaG domain is found at 2-126 (DVSLPCIKIQ…FRLAVPHVLN (125 aa)).

The chain is Protein ApaG from Vibrio cholerae serotype O1 (strain ATCC 39541 / Classical Ogawa 395 / O395).